We begin with the raw amino-acid sequence, 179 residues long: Cytoglobin-2 (179 aa).

A compositionally biased stretch (acidic residues) spans Met-1–Glu-11. Residues Met-1–Thr-20 form a disordered region. The Globin domain occupies Pro-18 to Thr-167. The heme b site is built by His-81 and His-113.

Belongs to the globin family. As to quaternary structure, monomeric. Expressed in all tissues examined, with highest levels in brain and eye, and considerably lower levels in skin, gut, heart, gill, liver and muscle.

The protein resides in the cytoplasm. It is found in the nucleus. It catalyses the reaction Fe(II)-heme b-[protein] + nitric oxide + O2 = Fe(III)-heme b-[protein] + nitrate. It carries out the reaction Fe(III)-heme b-[protein] + nitric oxide + H2O = Fe(II)-heme b-[protein] + nitrite + 2 H(+). The catalysed reaction is 2 superoxide + 2 H(+) = H2O2 + O2. The enzyme catalyses H2O2 + AH2 = A + 2 H2O. Functionally, probable multifunctional globin with a hexacoordinated heme iron required for the catalysis of various reactions depending on redox condition of the cell as well as oxygen availability. Has a nitric oxide dioxygenase (NOD) activity and is most probably involved in cell-mediated and oxygen-dependent nitric oxide consumption. Under normoxic conditions functions as a nitric oxide dioxygenase (NOD) but under hypoxic conditions the globin may switch its function to that of a nitrite (NO2) reductase (NiR), generating nitric oxide. Could also have peroxidase and superoxide dismutase activities, detoxifying reactive oxygen species and protecting cells against oxidative stress. Also binds dioxygen with low affinity and could function as an oxygen sensor but has probably no function as a respiratory oxygen carrier. The polypeptide is Cytoglobin-2 (Danio rerio (Zebrafish)).